We begin with the raw amino-acid sequence, 399 residues long: MKDYNMIDSHTRRFDSTTNPTILKVIGAGGGGSNAVNRMIEYGVRDVEFIVANTDLQALQTSIAPIKIALGAKVTAGLGAGGKPEIGQAAAEEDIDVIRNHLSGADMVFITAGMGGGTGTGAAPVIAQVAKELGILTVGVVTKPFKFEGPKKLRLAEQGINNLRKSVDTLIIIPNQKLLTVVDKRTTIKDAFKRADDVLRMGVQGIAGLIIEHGEVNIDFADVKSIMQGQGDALMGIGYGKGENRAVDAATSAISNPLLEEVRIEGSKGLLVNVTGGDDFSLLELEEIMGIITVSVDDEATVIYGHAINSNLEDEIYVTVVATGFASKKQKEISSTPENNTLSSKEFDTLMSGNQNAPSGSYEQQDSSFAAKSKNVNYFDDDIDVPTFLRNLNKKSSDD.

Residues 30–34, 117–119, E148, K152, and D196 each bind GTP; these read GGGSN and GTG. The segment at 349-368 is disordered; that stretch reads TLMSGNQNAPSGSYEQQDSS. The span at 351 to 368 shows a compositional bias: polar residues; sequence MSGNQNAPSGSYEQQDSS.

This sequence belongs to the FtsZ family. Homodimer. Polymerizes to form a dynamic ring structure in a strictly GTP-dependent manner. Interacts directly with several other division proteins.

The protein localises to the cytoplasm. In terms of biological role, essential cell division protein that forms a contractile ring structure (Z ring) at the future cell division site. The regulation of the ring assembly controls the timing and the location of cell division. One of the functions of the FtsZ ring is to recruit other cell division proteins to the septum to produce a new cell wall between the dividing cells. Binds GTP and shows GTPase activity. The sequence is that of Cell division protein FtsZ from Borreliella burgdorferi (strain ATCC 35210 / DSM 4680 / CIP 102532 / B31) (Borrelia burgdorferi).